A 530-amino-acid chain; its full sequence is Calcium/calmodulin-dependent protein kinase type II alpha chain (530 aa).

Positions aspartate 12–isoleucine 272 constitute a Protein kinase domain. ATP contacts are provided by residues leucine 20–valine 28 and lysine 43. The Proton acceptor role is filled by aspartate 136. Threonine 287 carries the phosphothreonine; by autocatalysis modification. The segment at leucine 291–lysine 301 is calmodulin-binding. 2 positions are modified to phosphothreonine; by autocatalysis: threonine 306 and threonine 307. Residues isoleucine 320–threonine 358 form a disordered region. Serine 327 carries the phosphoserine modification.

This sequence belongs to the protein kinase superfamily. CAMK Ser/Thr protein kinase family. CaMK subfamily. In terms of assembly, interacts with CASK. In terms of processing, autophosphorylation at Thr-287 is independent of autophosphorylation at Thr-306 and Thr-307. As to expression, expressed at a high level in the central nervous system during the late embryonic stage. In adults, expression is more abundant in the head than in the body.

The enzyme catalyses L-seryl-[protein] + ATP = O-phospho-L-seryl-[protein] + ADP + H(+). It carries out the reaction L-threonyl-[protein] + ATP = O-phospho-L-threonyl-[protein] + ADP + H(+). CASK plays a role in regulation of CaMKII autophosphorylation. When complexed with CASK and in the presence Ca[2+]/CaM, autophosphorylation of Thr-287 causes constitutive activation of the kinase. In the absence of Ca[2+]/CaM, autophosphorylation of Thr-306 causes inactivation of the kinase. In terms of biological role, a key regulator of plasticity in synaptic physiology and behavior, alterations in its activity produce pleiotrophic effects that involve synaptic transmission and development as well as various aspects of behavior. Directly modulates eag potassium channels. In Drosophila melanogaster (Fruit fly), this protein is Calcium/calmodulin-dependent protein kinase type II alpha chain (CaMKII).